Here is a 158-residue protein sequence, read N- to C-terminus: Transcription elongation factor GreA (158 aa).

Residues 41 to 61 (GDLSENAEYHAAKEDQSHNEG) are disordered. Residues 51–74 (AAKEDQSHNEGRIAELEDKLARAE) adopt a coiled-coil conformation.

This sequence belongs to the GreA/GreB family.

In terms of biological role, necessary for efficient RNA polymerase transcription elongation past template-encoded arresting sites. The arresting sites in DNA have the property of trapping a certain fraction of elongating RNA polymerases that pass through, resulting in locked ternary complexes. Cleavage of the nascent transcript by cleavage factors such as GreA or GreB allows the resumption of elongation from the new 3'terminus. GreA releases sequences of 2 to 3 nucleotides. This Nitrobacter hamburgensis (strain DSM 10229 / NCIMB 13809 / X14) protein is Transcription elongation factor GreA.